The following is a 602-amino-acid chain: Translation factor GUF1 homolog, organellar chromatophore (602 aa).

The region spanning 7–189 is the tr-type G domain; the sequence is SRIRNFCIIA…AIVERIPPPV (183 aa). GTP-binding positions include 16-23, 82-86, and 136-139; these read AHIDHGKS, DTPGH, and NKID.

The protein belongs to the TRAFAC class translation factor GTPase superfamily. Classic translation factor GTPase family. LepA subfamily.

The protein localises to the plastid. Its subcellular location is the organellar chromatophore. It carries out the reaction GTP + H2O = GDP + phosphate + H(+). Promotes protein synthesis. May act as a fidelity factor of the translation reaction, by catalyzing a one-codon backward translocation of tRNAs on improperly translocated ribosomes. The polypeptide is Translation factor GUF1 homolog, organellar chromatophore (Paulinella chromatophora).